The sequence spans 180 residues: UPF0227 protein KPN78578_10770 (180 aa).

This sequence belongs to the UPF0227 family.

The chain is UPF0227 protein KPN78578_10770 from Klebsiella pneumoniae subsp. pneumoniae (strain ATCC 700721 / MGH 78578).